The sequence spans 106 residues: Small ribosomal subunit protein bS16 (106 aa).

Belongs to the bacterial ribosomal protein bS16 family.

This chain is Small ribosomal subunit protein bS16, found in Protochlamydia amoebophila (strain UWE25).